The primary structure comprises 90 residues: Putative antitoxin VapB8 (90 aa).

The tract at residues 1 to 56 is disordered; that stretch reads MEKSRCHAVAHGGGCAGSAKSHKSGGRCGQGRGAGDSHGTRGAGRRYRAASAPHPL. The segment covering 26-36 has biased composition (gly residues); it reads GRCGQGRGAGD.

Antitoxin component of a possible type II toxin-antitoxin (TA) system. The cognate toxin is VapC8. The protein is Putative antitoxin VapB8 (vapB8) of Mycobacterium tuberculosis (strain ATCC 25618 / H37Rv).